The following is a 118-amino-acid chain: Crustacean hyperglycemic hormones 2 (118 aa).

The signal sequence occupies residues 1 to 22 (MTAFRLVAVALVVVVACSTTWA). Intrachain disulfides connect Cys-51–Cys-87, Cys-67–Cys-83, and Cys-70–Cys-96. Val-116 is subject to Valine amide.

Belongs to the arthropod CHH/MIH/GIH/VIH hormone family.

It is found in the secreted. In terms of biological role, hormone found in the sinus gland of isopods and decapods which controls the blood sugar level. Has a secretagogue action over the amylase released from the midgut gland. May act as a stress hormone and may be involved in the control of molting and reproduction. The sequence is that of Crustacean hyperglycemic hormones 2 (CHH2) from Penaeus monodon (Giant tiger prawn).